A 151-amino-acid polypeptide reads, in one-letter code: Apolipoprotein A-I (151 aa).

The signal sequence occupies residues 1-18 (MKAVVLTLAVLFLTGSQA). The propeptide occupies 19–24 (RHFWQQ). Repeat copies occupy residues 67–88 (LKLL…EQIG) and 89–110 (PVTQ…QEMS). Residues 67–143 (LKLLDNWDTL…EVELYRQKVA (77 aa)) form a 4 X approximate tandem repeats region. Methionine 109 bears the Methionine sulfoxide mark. Residues 111 to 121 (KDLEEVKQKVQ) form a 3; half-length repeat. Copy 4 of the repeat occupies 122–143 (PYLDDFQKKWQEEVELYRQKVA).

Belongs to the apolipoprotein A1/A4/E family. In terms of assembly, homodimer. Interacts with APOA1BP and CLU. Component of a sperm activating protein complex (SPAP), consisting of APOA1, an immunoglobulin heavy chain, an immunoglobulin light chain and albumin. Interacts with NDRG1. Interacts with SCGB3A2. Interacts with NAXE and YJEFN3. In terms of processing, glycosylated. Palmitoylated. Post-translationally, phosphorylation sites are present in the extracellular medium. As to expression, major protein of plasma HDL, also found in chylomicrons.

The protein localises to the secreted. Functionally, participates in the reverse transport of cholesterol from tissues to the liver for excretion by promoting cholesterol efflux from tissues and by acting as a cofactor for the lecithin cholesterol acyltransferase (LCAT). As part of the SPAP complex, activates spermatozoa motility. This is Apolipoprotein A-I (APOA1) from Panthera tigris altaica (Siberian tiger).